Here is a 183-residue protein sequence, read N- to C-terminus: Shikimate kinase (183 aa).

An ATP-binding site is contributed by 25-30 (GAGKTT). T29 lines the Mg(2+) pocket. Substrate-binding residues include D47, R71, and G93. ATP is bound at residue R131. R150 contributes to the substrate binding site.

It belongs to the shikimate kinase family. As to quaternary structure, monomer. It depends on Mg(2+) as a cofactor.

The protein localises to the cytoplasm. The catalysed reaction is shikimate + ATP = 3-phosphoshikimate + ADP + H(+). It functions in the pathway metabolic intermediate biosynthesis; chorismate biosynthesis; chorismate from D-erythrose 4-phosphate and phosphoenolpyruvate: step 5/7. In terms of biological role, catalyzes the specific phosphorylation of the 3-hydroxyl group of shikimic acid using ATP as a cosubstrate. The polypeptide is Shikimate kinase (Dechloromonas aromatica (strain RCB)).